A 156-amino-acid polypeptide reads, in one-letter code: MSRRNAAVKRPILPDPQFNNRLATMMVARLMKHGKKSTAQRILSDAFGMIGERTGGDPVELFETAVKNATPLVEVRARRVGGATYQVPMEVRQERGTAMALRWLVNFSRARNGRSMAQKLAGELMDAANEAGSAVRKREETHKMAEANKAFAHYRY.

The protein belongs to the universal ribosomal protein uS7 family. Part of the 30S ribosomal subunit. Contacts proteins S9 and S11.

Its function is as follows. One of the primary rRNA binding proteins, it binds directly to 16S rRNA where it nucleates assembly of the head domain of the 30S subunit. Is located at the subunit interface close to the decoding center, probably blocks exit of the E-site tRNA. The protein is Small ribosomal subunit protein uS7 of Synechococcus sp. (strain CC9311).